The sequence spans 282 residues: MRQTRGEASPSAVSLAFKFASLAVLCVLLLLMVILGYSNSSTKAKEVTVTTNGQLRDEKESLKLKNDSPDLLIKHLQTKQNMGDKTVYLTFDDGPSAVTTRLLDVLKSADVKATFFMLSPRMNEFKQAVKRAEKEGHALGLHGVTHNNRLFYQTPTSPLKEMQEARDTLQDITGYKTDLVRTPYGSKPSLTASQIRNLEKDGFVYWDWTIDSMDWKYRNSQYVTAVLQQLENMEHSSSSRPNVILMHDLPATVNALPVLINKLKEKGYSFGVLEDTMVPVHE.

The chain crosses the membrane as a helical span at residues 15–35 (LAFKFASLAVLCVLLLLMVIL). One can recognise a NodB homology domain in the interval 85 to 271 (KTVYLTFDDG…KLKEKGYSFG (187 aa)).

This sequence belongs to the polysaccharide deacetylase family.

The protein localises to the cell membrane. This is Putative polysaccharide deacetylase YheN (yheN) from Bacillus subtilis (strain 168).